The following is a 95-amino-acid chain: Aspartyl/glutamyl-tRNA(Asn/Gln) amidotransferase subunit C (95 aa).

The protein belongs to the GatC family. Heterotrimer of A, B and C subunits.

It carries out the reaction L-glutamyl-tRNA(Gln) + L-glutamine + ATP + H2O = L-glutaminyl-tRNA(Gln) + L-glutamate + ADP + phosphate + H(+). The enzyme catalyses L-aspartyl-tRNA(Asn) + L-glutamine + ATP + H2O = L-asparaginyl-tRNA(Asn) + L-glutamate + ADP + phosphate + 2 H(+). Functionally, allows the formation of correctly charged Asn-tRNA(Asn) or Gln-tRNA(Gln) through the transamidation of misacylated Asp-tRNA(Asn) or Glu-tRNA(Gln) in organisms which lack either or both of asparaginyl-tRNA or glutaminyl-tRNA synthetases. The reaction takes place in the presence of glutamine and ATP through an activated phospho-Asp-tRNA(Asn) or phospho-Glu-tRNA(Gln). This is Aspartyl/glutamyl-tRNA(Asn/Gln) amidotransferase subunit C from Thermodesulfovibrio yellowstonii (strain ATCC 51303 / DSM 11347 / YP87).